Here is a 1135-residue protein sequence, read N- to C-terminus: Exportin-6-A (1135 aa).

In terms of domain architecture, Importin N-terminal spans 31-97 (IESLLNNFAQ…RNSLPKLLLS (67 aa)).

This sequence belongs to the exportin family. Expressed during meiotic maturation 2 hours after germinal vesicle break down (GVBD) and in unfertilized and fertilized eggs, but not in oocytes (at protein level). Expressed in somatic cells, in oocytes, during meiotic maturation and in unfertilized and fertilized eggs.

The protein resides in the nucleus. The protein localises to the cytoplasm. In terms of biological role, mediates the nuclear export of actin and profilin-actin complexes in somatic cells. Oocyte nuclei lack active actin export. This chain is Exportin-6-A (xpo6-a), found in Xenopus laevis (African clawed frog).